A 759-amino-acid chain; its full sequence is 5-methyltetrahydropteroyltriglutamate--homocysteine methyltransferase (759 aa).

Positions 1–16 are enriched in polar residues; the sequence is MTQPVRRQPFTATITG. Residues 1 to 22 form a disordered region; it reads MTQPVRRQPFTATITGSPRIGP. 5-methyltetrahydropteroyltri-L-glutamate is bound by residues 24–27 and K118; that span reads RELK. L-homocysteine-binding positions include 437–439 and E490; that span reads IGS. L-methionine-binding positions include 437–439 and E490; that span reads IGS. 5-methyltetrahydropteroyltri-L-glutamate contacts are provided by residues 521-522 and W567; that span reads RC. D605 provides a ligand contact to L-homocysteine. D605 lines the L-methionine pocket. E611 contributes to the 5-methyltetrahydropteroyltri-L-glutamate binding site. Residues H647, C649, and E671 each contribute to the Zn(2+) site. H700 acts as the Proton donor in catalysis. C732 serves as a coordination point for Zn(2+).

This sequence belongs to the vitamin-B12 independent methionine synthase family. Zn(2+) is required as a cofactor.

The catalysed reaction is 5-methyltetrahydropteroyltri-L-glutamate + L-homocysteine = tetrahydropteroyltri-L-glutamate + L-methionine. The protein operates within amino-acid biosynthesis; L-methionine biosynthesis via de novo pathway; L-methionine from L-homocysteine (MetE route): step 1/1. In terms of biological role, catalyzes the transfer of a methyl group from 5-methyltetrahydrofolate to homocysteine resulting in methionine formation. The protein is 5-methyltetrahydropteroyltriglutamate--homocysteine methyltransferase of Mycobacterium tuberculosis (strain ATCC 25177 / H37Ra).